We begin with the raw amino-acid sequence, 104 residues long: L-rhamnose mutarotase (104 aa).

A substrate-binding site is contributed by Tyr-18. His-22 (proton donor) is an active-site residue. Substrate-binding positions include Tyr-41 and 76 to 77 (WW).

Belongs to the rhamnose mutarotase family. As to quaternary structure, homodimer.

The protein localises to the cytoplasm. It catalyses the reaction alpha-L-rhamnose = beta-L-rhamnose. The protein operates within carbohydrate metabolism; L-rhamnose metabolism. Its function is as follows. Involved in the anomeric conversion of L-rhamnose. This Salmonella agona (strain SL483) protein is L-rhamnose mutarotase.